Consider the following 276-residue polypeptide: MRESLKNSKRLVIKVGTSTLMYGNGHINLRTIEKLAMVLSDLRNEGKEVILVSSGAIGVGCHKLQLPVRPTSIPEQQAVASVGQSELMHIYSKFFGEYGQVVGQVLLTRDVTDFPISRENVMNTLESLLERGIIPIVNENDTVAVEELEHVTKYGDNDLLSAIVAKLVQADLLIMLSDIDGFYGSNPSTDPDAVMFSEINQITPEIEALAGGKGSKFGTGGMLTKLSAASYCMNANQKMILTNGKNPTIIFDIMQGEQVGTLFASKKEEFSHDGTH.

Residue Lys-14 participates in ATP binding. 3 residues coordinate substrate: Ser-54, Asp-141, and Asn-157. ATP is bound by residues 177-178 (SD) and 219-225 (TGGMLTK).

It belongs to the glutamate 5-kinase family.

It localises to the cytoplasm. The enzyme catalyses L-glutamate + ATP = L-glutamyl 5-phosphate + ADP. It participates in amino-acid biosynthesis; L-proline biosynthesis; L-glutamate 5-semialdehyde from L-glutamate: step 1/2. Functionally, catalyzes the transfer of a phosphate group to glutamate to form L-glutamate 5-phosphate. This chain is Glutamate 5-kinase, found in Listeria innocua serovar 6a (strain ATCC BAA-680 / CLIP 11262).